The chain runs to 1198 residues: Chromosome partition protein Smc (1198 aa).

ATP is bound at residue 40 to 47 (PNGSGKSN). Coiled-coil stretches lie at residues 175–211 (ITKY…GQLG) and 322–524 (LGEQ…LAKK). Residues 534–647 (CGTLADLLQV…VTDMEAATRV (114 aa)) enclose the SMC hinge domain. Positions 687–1042 (SREIQELRQE…AELDKTMSER (356 aa)) form a coiled coil. Residues 785–818 (AEEQSKLTDSIQEAQEALARQEEKNRQASREMEQ) are disordered. Residues 803–818 (ARQEEKNRQASREMEQ) are compositionally biased toward basic and acidic residues.

The protein belongs to the SMC family. In terms of assembly, homodimer.

It is found in the cytoplasm. In terms of biological role, required for chromosome condensation and partitioning. The protein is Chromosome partition protein Smc of Desulfitobacterium hafniense (strain Y51).